The sequence spans 301 residues: Cuticle collagen 1 (301 aa).

Positions 1–37 (METDGRLKAYKFVAYAAVGFSIAAVASVLLTLPMVYS) are cleaved as a signal peptide. The segment at 79 to 82 (RTTR) is furin-like endopeptidase recognition region. Triple-helical region regions lie at residues 105–134 (GPPG…PGKP), 153–179 (GPPG…PGTD), 183–209 (GSPG…PGTP), and 218–283 (GAPG…KGIC). Positions 109–284 (PAGAPGKPGK…GTPGEKGICP (176 aa)) are disordered. 2 stretches are compositionally biased toward pro residues: residues 131-164 (PGKP…PGAP) and 184-193 (SPGPRGPPGP). Residues 194 to 210 (AGEAGAPGPAGEPGTPA) are compositionally biased toward low complexity. The segment covering 226-258 (SGPPGPPGPPGAPGNDGPPGPPGPKGAPGPDGP) has biased composition (pro residues).

The protein belongs to the cuticular collagen family. As to quaternary structure, collagen polypeptide chains are complexed within the cuticle by disulfide bonds and other types of covalent cross-links.

The protein localises to the secreted. It is found in the extracellular space. Secreted collagen that forms part of the nematode cuticle, which functions as an exoskeleton and a barrier to protect the worm from its environment. Secretion and subsequent incorporation into the cuticle is likely mediated by bli-4, which probably cleaves at the N-terminal consensus furin cleavage site. In Caenorhabditis elegans, this protein is Cuticle collagen 1 (sqt-3).